The sequence spans 912 residues: Transcription factor bHLH140 (912 aa).

The segment at 1–57 (MDDFNLRSENPNSSSTTSSSSSSFHRHKSETGNTKRSRSTSTLSTDPQSVAARDRRH) is disordered. Low complexity predominate over residues 13–23 (SSSTTSSSSSS). Residues 43–92 (LSTDPQSVAARDRRHRISDRFKILQSMVPGGAKMDTVSMLDEAISYVKFL) enclose the bHLH domain. 234 to 241 (GPPGSGKS) lines the ATP pocket. One can recognise a Macro domain in the interval 511–690 (KAKASQKNID…KYKGSQDKAV (180 aa)). Residues 657–666 (PKRSSQTAVS) are compositionally biased toward polar residues. Residues 657 to 706 (PKRSSQTAVSDSGEDIKEDSERNKKYKGSQDKAVTNNLESESLEDTRGSG) form a disordered region. The 110-residue stretch at 720–829 (LHSIAMHPER…SQDFNSDSLK (110 aa)) folds into the HIT domain. The segment at 870 to 893 (LRCNRCRSAHPNIPKLKSHVRSCH) adopts a C2H2-type zinc-finger fold.

As to quaternary structure, homodimer.

Its subcellular location is the nucleus. The polypeptide is Transcription factor bHLH140 (BHLH140) (Arabidopsis thaliana (Mouse-ear cress)).